A 481-amino-acid chain; its full sequence is Tryptophan--tRNA ligase, cytoplasmic (481 aa).

The WHEP-TRS domain maps to 12 to 68; sequence SPLELFNSIAAQGELVRSLKAGNAPKDEIESAVKMLLSLKMNYKTAMGEEYKAGCPP. Positions 65-85 are disordered; the sequence is GCPPGNSTAGSNGDPDATKAS. N6-succinyllysine is present on Lys-158. Positions 168 to 177 match the 'HIGH' region motif; that stretch reads PSSEAMHLGH. Positions 353-357 match the 'KMSKS' region motif; the sequence is KMSAS. Phosphoserine is present on Ser-355.

It belongs to the class-I aminoacyl-tRNA synthetase family. As to quaternary structure, homodimer. Interacts with oxidized form of GAPDH. Proteolytic cleavage generates 2 forms; T1-TrpRS and T2-TrpRS.

It is found in the cytoplasm. It catalyses the reaction tRNA(Trp) + L-tryptophan + ATP = L-tryptophyl-tRNA(Trp) + AMP + diphosphate + H(+). Functionally, catalyzes the attachment of tryptophan to tRNA(Trp) in a two-step reaction: tryptophan is first activated by ATP to form Trp-AMP and then transferred to the acceptor end of the tRNA(Trp). Could also possess an angiostatic activity. In Rattus norvegicus (Rat), this protein is Tryptophan--tRNA ligase, cytoplasmic.